The sequence spans 748 residues: WD repeat-containing protein 91 (748 aa).

Positions 183 to 228 (QRTNQVQEENEVLRQKLFALQAEIHRLKKEEQQQEEEAAALVQHKL) form a coiled coil. At S257 the chain carries Phosphoserine. A compositionally biased stretch (low complexity) spans 266–279 (LLPQSKKSPSRLSP). A disordered region spans residues 266 to 368 (LLPQSKKSPS…PEVSGAEAEP (103 aa)). The span at 284-300 (PQAQSSAKKDSFSSQAT) shows a compositional bias: polar residues. Phosphoserine occurs at positions 289 and 294. Over residues 333-344 (RLQDHGKERREL) the composition is skewed to basic and acidic residues. Residues 345–354 (LSTSSSQSQC) are compositionally biased toward polar residues. WD repeat units follow at residues 407–446 (EHHS…QTKA), 449–489 (ISKS…NLCE), 512–556 (VCSA…QQLQ), 561–600 (PEPI…CAMS), 603–642 (AHCG…LKVS), 665–703 (VQVP…KVLE), and 710–748 (GHRA…AHKL).

This sequence belongs to the WD repeat WDR91 family. In terms of assembly, interacts with WDR81; involved in early to late endosome cargo transport. Interacts with BECN1; negatively regulates the PI3 kinase/PI3K activity associated with endosomal membranes.

It is found in the early endosome membrane. The protein resides in the late endosome membrane. Its function is as follows. Functions as a negative regulator of the PI3 kinase/PI3K activity associated with endosomal membranes via BECN1, a core subunit of the PI3K complex. By modifying the phosphatidylinositol 3-phosphate/PtdInsP3 content of endosomal membranes may regulate endosome fusion, recycling, sorting and early to late endosome transport. It is for instance, required for the delivery of cargos like BST2/tetherin from early to late endosome and thereby participates indirectly to their degradation by the lysosome. May play a role in meiosis. The chain is WD repeat-containing protein 91 from Mus musculus (Mouse).